We begin with the raw amino-acid sequence, 119 residues long: Large ribosomal subunit protein bL20 (119 aa).

It belongs to the bacterial ribosomal protein bL20 family.

In terms of biological role, binds directly to 23S ribosomal RNA and is necessary for the in vitro assembly process of the 50S ribosomal subunit. It is not involved in the protein synthesizing functions of that subunit. In Nitrosomonas europaea (strain ATCC 19718 / CIP 103999 / KCTC 2705 / NBRC 14298), this protein is Large ribosomal subunit protein bL20.